The sequence spans 419 residues: Squalene synthase R6 (419 aa).

Residues 397-417 (TMYLVVLLLGILGVAAAVLMA) traverse the membrane as a helical segment.

The protein belongs to the phytoene/squalene synthase family. Mg(2+) serves as cofactor.

It localises to the membrane. It carries out the reaction 2 (2E,6E)-farnesyl diphosphate + NADPH + H(+) = squalene + 2 diphosphate + NADP(+). The catalysed reaction is 2 (2E,6E)-farnesyl diphosphate + NADH + H(+) = squalene + 2 diphosphate + NAD(+). It functions in the pathway terpene metabolism; lanosterol biosynthesis; lanosterol from farnesyl diphosphate: step 1/3. Squalene synthase; part of the gene cluster that mediates the biosynthesis of squalestatin S1 (SQS1, also known as zaragozic acid A), a heavily oxidized fungal polyketide that offers potent cholesterol lowering activity by targeting squalene synthase (SS). Catalyzes the condensation of 2 two farnesyl pyrophosphate moieties to form squalene. The presence of a gene encoding a squalene synthase supports the identification of the cluster as being responsible for SQS1 production and suggests a likely mechanism for self-resistance. The protein is Squalene synthase R6 of Phoma sp. (strain ATCC 20986 / MF5453).